Reading from the N-terminus, the 442-residue chain is Putative major teichoic acid biosynthesis protein C (442 aa).

Its function is as follows. Unknown. Might be involved in poly(glycerol phosphate) teichoic acid biosynthesis. The chain is Putative major teichoic acid biosynthesis protein C (tagC) from Bacillus subtilis (strain 168).